Reading from the N-terminus, the 226-residue chain is Lysosomal-associated transmembrane protein 4B (226 aa).

Transmembrane regions (helical) follow at residues 26 to 46, 72 to 92, 100 to 120, and 153 to 173; these read ILLGVWYLILNAVVLLILLSA, MCIAIAISVLMILICAMATYG, WIIPFFCYQIFDFALNTLVAV, and CLVLIILLFISIILAFKGYLI. The tract at residues 205–221 is required for NEDD4 interaction; sequence PPYDDATVNSATKEPPP.

The protein belongs to the LAPTM4/LAPTM5 transporter family. Homooligomer; upon reaching the lysosomes. Interacts with MCOLN1. Interacts with NEDD4; may play a role in the lysosomal sorting of LAPTM4B; enhances HGS association with NEDD4; mediates inhibition of EGFR degradation. Interacts with PIP5K1C; promotes SNX5 association with LAPTM4B; kinase activity of PIP5K1C is required; interaction is regulated by phosphatidylinositol 4,5-bisphosphate generated by PIP5K1C. Interacts with HGS; promotes HGS ubiquitination. Interacts with SNX5. Interacts with SLC3A2 and SLC7A5; recruits SLC3A2 and SLC7A5 to lysosomes to promote leucine uptake into these organelles and is required for mTORC1 activation. Interacts with LRRC32; decreases TGFB1 production in regulatory T cells. Interacts with BECN1; competes with EGFR for LAPTM4B binding; regulates EGFR activity. Interacts with EGFR; positively correlates with EGFR activation. Post-translationally, undergoes proteolytic cleavage following delivery to the lysosomes. Ubiquitinated by NEDD4. As to expression, strongly expressed in fetal ovary, testis, adrenal gland, liver and uterus, and weakly expressed in the spleen.

It is found in the endomembrane system. The protein resides in the late endosome membrane. It localises to the cell membrane. The protein localises to the cell projection. Its subcellular location is the lysosome membrane. It is found in the endosome membrane. The protein resides in the endosome. It localises to the multivesicular body membrane. The protein localises to the multivesicular body lumen. Functionally, required for optimal lysosomal function. Blocks EGF-stimulated EGFR intraluminal sorting and degradation. Conversely by binding with the phosphatidylinositol 4,5-bisphosphate, regulates its PIP5K1C interaction, inhibits HGS ubiquitination and relieves LAPTM4B inhibition of EGFR degradation. Recruits SLC3A2 and SLC7A5 (the Leu transporter) to the lysosome, promoting entry of leucine and other essential amino acid (EAA) into the lysosome, stimulating activation of proton-transporting vacuolar (V)-ATPase protein pump (V-ATPase) and hence mTORC1 activation. Plays a role as negative regulator of TGFB1 production in regulatory T cells. Binds ceramide and facilitates its exit from late endosome in order to control cell death pathways. This chain is Lysosomal-associated transmembrane protein 4B, found in Bos taurus (Bovine).